The chain runs to 498 residues: PHD finger protein 10 (498 aa).

Positions 1 to 10 (MAAAAGPGAA) are enriched in low complexity. The tract at residues 1-62 (MAAAAGPGAA…SSRSCETSSQ (62 aa)) is disordered. The residue at position 2 (Ala2) is an N-acetylalanine. Ser12, Ser36, and Ser50 each carry phosphoserine. The segment at 89–185 (MLQEQVSEYL…HYKEYSQMQQ (97 aa)) is essential to induce neural progenitor proliferation. Residues 89–295 (MLQEQVSEYL…PPLDPELPAL (207 aa)) form an SAY region. Lys241 participates in a covalent cross-link: Glycyl lysine isopeptide (Lys-Gly) (interchain with G-Cter in SUMO2). Position 270 is a phosphoserine (Ser270). Residues 285-296 (EPPLDPELPALD) show a composition bias toward low complexity. Residues 285 to 368 (EPPLDPELPA…KRSVLSKSVP (84 aa)) are disordered. An essential to induce neural progenitor proliferation region spans residues 292–334 (LPALDSDGDSDDGEDGRGDEKRKNKGTSDSSSGNVSEGESPPD). 4 positions are modified to phosphoserine: Ser297, Ser301, Ser327, and Ser331. Over residues 318-328 (TSDSSSGNVSE) the composition is skewed to polar residues. Positions 345 to 359 (KSKDKAATPRKDGPK) are enriched in basic and acidic residues. The PHD-type 1; degenerate zinc-finger motif lies at 379–436 (ICGICLKGKESNKKGKAESLIHCSQCENSGHPSCLDMTMELVSMIKTYPWQCMECKTC). Lys385 participates in a covalent cross-link: Glycyl lysine isopeptide (Lys-Gly) (interchain with G-Cter in SUMO2). The PHD-type 2; degenerate zinc finger occupies 438-481 (ICGQPHHEEEMMFCDMCDRGYHTFCVGLGAIPSGRWICDCCQRA).

The protein belongs to the SAYP family. As to quaternary structure, component of neural progenitors-specific chromatin remodeling complex (npBAF complex) composed of at least, ARID1A/BAF250A or ARID1B/BAF250B, SMARCD1/BAF60A, SMARCD3/BAF60C, SMARCA2/BRM/BAF190B, SMARCA4/BRG1/BAF190A, SMARCB1/BAF47, SMARCC1/BAF155, SMARCE1/BAF57, SMARCC2/BAF170, PHF10/BAF45A, ACTL6A/BAF53A and actin. Interacts with ACTL6A/BAF53A, SMARCA2/BRM/BAF190B, SMARCA4/BRG1/BAF190A and PBRM1/BAF180.

It is found in the nucleus. Its function is as follows. Involved in transcription activity regulation by chromatin remodeling. Belongs to the neural progenitors-specific chromatin remodeling complex (npBAF complex) and is required for the proliferation of neural progenitors. During neural development a switch from a stem/progenitor to a post-mitotic chromatin remodeling mechanism occurs as neurons exit the cell cycle and become committed to their adult state. The transition from proliferating neural stem/progenitor cells to post-mitotic neurons requires a switch in subunit composition of the npBAF and nBAF complexes. As neural progenitors exit mitosis and differentiate into neurons, npBAF complexes which contain ACTL6A/BAF53A and PHF10/BAF45A, are exchanged for homologous alternative ACTL6B/BAF53B and DPF1/BAF45B or DPF3/BAF45C subunits in neuron-specific complexes (nBAF). The npBAF complex is essential for the self-renewal/proliferative capacity of the multipotent neural stem cells. The nBAF complex along with CREST plays a role regulating the activity of genes essential for dendrite growth. The chain is PHD finger protein 10 (PHF10) from Homo sapiens (Human).